The chain runs to 2381 residues: MEQKLVKNTSSLSKIPDHLKEINNIQNILILLTRLNLVRFLFGIFSNLEYIVKLFDFRILNSLILRDLRSSNNQRNKLLLKLLLLLVIPISLYRLNTKSLIERRYLDLAKIVNGYGNSNKVRERLKEHFESSYSSISPNIFNSSNREAITSATGLQEYYSDSPTKAQSYGIIPVSNTIDFSDPDWWKSWIIKDILPSWNISQSKVNEVQMLLSEKSIENLKNFFEFYIDIILCKPYDWKYDFDLYFVMNRNQNRNQDEEIDWKQVNRLDDTLFPSAIVAFCDKILFEVEGPLNRQGHQLDINLNFSRKYLFHTYISLSRREIKNWIDLIQPKGWIFFQDFAEFYIWQSYSNKNSPWKGDRHLLDRTRHILEERFVDPNDLEEDQSITKVQYFLSDIIYNFSEYILSRIEKFNQLETLKKRIRDDSSLITQPLKDIFDNQKIIETNKRHHIENNFLDKEKGSTSSEKNSITTNFFLRFGFYNISLFRKWNWKQFLISNYLPTNIEYIKELNGESHFSDISFLIKNEKEYLENKIFSESKNSAIVDLFPTERRLFDNTIPKEIKYGLLDILSIHELNGSFIDNKQIFEKNRSLKTQEYLFDDSGSSEVNRIVDLWKIKNFEYSFFESSLSPKDCLSKSERYLNNKYSFLFFNKSLFLDSSSLIYSVVNFYINKDYVSSDYSRFKKTFVTKIDQLILRITNPGLLLTEGFSGNSNRYKNFLISKSDSSINQILYKYLKVKNIEYFSQKVLKDLIREYFKIGGINLGKTKEQMVSLWTLSQQKIRPFWDELKEKTNISLISLLTTIYKQNQLISLSSIYTVYSYQYIRILHSDYFLRVKNNFEFWINNDTSNDLTKNIISPDLVNWKINLEKWFNQCIVQIDQYRGVYLYLNVYKWRDGNRQWKSFFSYIVSNKYPIISVESKNLLKSLLLLRNEKISRNHFSKSLFLTKTFINRFLDYSFPYMIEPFLYKLQDIDQFFFYRFPKLLKIPSYIASIKEFFGDENIFSKESKCFLDDKNFVSLTRLQILRDKNLSNFLCNEDICMEGLNDESIFAESNYWLNDVAVTKKISPKSCSDESNTLKLLDYLYNPRLNYNERLRPFEGKFITKGYDSTYKDILNNVPIRYNHQLFLSTPIRPFYGEKDTISFVQSQVFKKLLARSQRFNRQTLGYIDNLYKLLIALTRSNSFSHGNKNSYSFGKDLKNRLQIVNFDIGKSFFEADRSNQYQSFRTSSKLQDESTEYQPYPADELFPEFLSNLENHKMLHWLRRFLLYRYLTPKSFQEMIDNKFLKEKKKELETILLKEEYIIRSFYPININEVLDRISIYKTLQQENISNKWSLFRNYTPWFFTLEWWNYLNNLVSETFPEVLLNTNDLLDSNRSYIIRYINNLLTSLWLELKFRSKNENVDYLISKSDSFLVKEISNQKNKPFFKWSLLRFVNGHNVEFSAIVLLLIFIYGISRHYLPTLLGFNSISLWKRIEIIRYLMDPLQGFYLKKLMHSPSTKFMQTRDLLIYRVKRILKSINHMPFYFFIKGELDIWLYHRNGLDTFRPHKRKLTQHLTTNKIISHYGLNLNYGSNFLIKEPGLNYLRFLVETCQKDLIKYQICNFESAEKWVLSALQQKILFPQKIWQDNSLNIPSYQTPASLQLGSFPSKGILLIGPMETGRSYLIKNLAADSYLPSIRIPVNKLLYNKLDFKNTPATILSKQSLLRLNLLFESAEKMSPCIIWIQDIHELNINRFGHRSEADPKLLLCSVLKNISNSSFNSYTKNNIVIASTHMPTKVDPAIISPNRLDQLINLRILTNCQRQKEFPVLLGVKGFDSKADSAFLKKLGYKTMGYSKRDLSVLANEALLIGITLNTSFVCSDTIRLSLHKQISAVTYTDNESRFSLKYEILFYKIGKAIIRNTLINTSSIDFSFVQNNLLKRRFYFLSNWYLEPAITESTIKEFTILPHILGFLAGFAARDSWFILENKKENFIFIDKVVENDLNLSVAILEGLLTEFSYLEICEKKLDEVFVPPPQSKARNFLNMMQQGLSLNTNKQIVRKIDRYKSLSSVRSERNIPRSIAWSPRVWRISFLRSNIYESIRIPSESNRLYNLIVFYQNQDKLPKRNFDLNKIKSGQSVSHKRKEKFFGYKRSLGNMRQKQIQTLESQLENVLLREHFFKLGISNSSTQYQTQYDSSYQSILFLGGRFIWNSAGLIHPQNNLVFSRLDLFANEETVRRLYITYGVRRDREKHYSNEKIKQFFLHRGYDRNLMTKLVINWWKRLPFAEKKHFEFFNNNQMMRTFLQHPQLFSSVYLHQDCLLEDLQEKYARFNLSIHRQRWIRSNRLLFNDLSIYNMLFESYQYLLNLFLSNRSLLIQLTNILVGKKLILPNEIHDILYYFK.

An ATP-binding site is contributed by 1655–1662 (GPMETGRS).

This sequence belongs to the Ycf2 family.

It localises to the plastid. The protein localises to the chloroplast stroma. Its function is as follows. Probable ATPase of unknown function. Its presence in a non-photosynthetic plant (Epifagus virginiana) and experiments in tobacco indicate that it has an essential function which is probably not related to photosynthesis. The polypeptide is Protein Ycf2 (Angiopteris evecta (Mule's foot fern)).